The primary structure comprises 134 residues: Profilin-5 (134 aa).

The protein belongs to the profilin family. As to quaternary structure, occurs in many kinds of cells as a complex with monomeric actin in a 1:1 ratio. In terms of tissue distribution, specifically expressed in mature pollen grains. Expressed in germinating pollen grains. Expressed in growing pollen tubes (at protein level).

The protein localises to the cytoplasm. Its subcellular location is the cytoskeleton. Binds to actin monomers and regulates the organization of the actin cytoskeleton. At high concentrations, profilin prevents the polymerization of actin, whereas it enhances it at low concentrations. At low concentrations, associates with the poly-proline motif of formins to enhance actin filament elongation rate. Acts redundantly with PRF4 to regulate apical actin polymerization at the tip of pollen tube and control polarized pollen tube growth. Functions probably by favoring formin-mediated actin polymerization at pollen tube tips. This is Profilin-5 from Arabidopsis thaliana (Mouse-ear cress).